The chain runs to 638 residues: MLVLFETSAGFALFKVLDEGKMKSKPVDINNFFETPEKASSFVSLKKFYKFDGTLDALEAQTAIAECKVPESLSNFLKKNVVSEKLNEQLIVSDSKFGNAIKDALNIKVLCDDTTQELIRGIRLQLKSLVNANEQDLNAMSIGLSHSYSRYKLKFSPDKVDTMIVQAISLLDDLTTEINIYAMRAREWYGWHFPELGKLITNHTQYANAIKAMGNRKSAVDTDFTDILPEEVAEEVKEAAQISMGTEISPEDLDHIFALCDQFLSIQAYHTELTEYLKSRMEAIAPNLTILVGEIVGARLICRAGSLMNLAKYPASTIQILGAEKALFRALKTKHNTPKYGLIYNAKIVGEASLKNKGKMSRVLAAKAALSARFDALCEVSDTSYGIAYKGAVDRRAAAIEGREVRKSLNAVKPEKSGNVAKYDHTKSATTNTTRDVATKSSKESSIKQEKQDVKMEEASSSDSDSSSDSDSSEEEKSKKSKKSKKEETPVAKEEKKEKKSKKEETPVAKEEKKEKEEKKEKKDKKEKKEEKEDKKEEKKEKKDKKEKTEETPVAKEEKKEKKEKKEEKEEKKDKKEKKEKKEEKEEKKEKKEKKSSSKEDKKEKEEKKEKKSSSKEDKKRKDRDEEPEEKKSKKSKK.

Residues 284-402 enclose the Nop domain; sequence IAPNLTILVG…VDRRAAAIEG (119 aa). The disordered stretch occupies residues 416 to 638; that stretch reads KSGNVAKYDH…EEKKSKKSKK (223 aa). Composition is skewed to basic and acidic residues over residues 437–458, 485–521, 527–574, and 580–632; these read VATK…KMEE, KKEE…EKKE, EKKE…EKKD, and EKKE…EEKK.

The protein belongs to the NOP5/NOP56 family.

Its subcellular location is the nucleus. The protein resides in the nucleolus. Functionally, involved in the biogenesis of box C/D snoRNAs. Part of the small subunit (SSU) processome, first precursor of the small eukaryotic ribosomal subunit. Could function in the small subunit (SSU) processome, first precursor of the small eukaryotic ribosomal subunit. During the assembly of the SSU processome in the nucleolus, many ribosome biogenesis factors, an RNA chaperone and ribosomal proteins associate with the nascent pre-rRNA and work in concert to generate RNA folding, modifications, rearrangements and cleavage as well as targeted degradation of pre-ribosomal RNA by the RNA exosome. As a component of box C/D small nucleolar ribonucleoprotein (snoRNP) complexes could function in methylation of ribosomal RNAs (rRNAs). The polypeptide is Nucleolar protein 58 (nop58) (Dictyostelium discoideum (Social amoeba)).